Reading from the N-terminus, the 522-residue chain is Man(5)GlcNAc(2)-PP-dolichol translocation protein RFT1 (522 aa).

The next 10 helical transmembrane spans lie at 35-55, 75-95, 108-128, 143-165, 177-197, 322-342, 354-374, 400-420, 457-477, and 479-499; these read DVLGLVNVRLTLLYSSILFLT, LLWLSPIISTVISVVCVYLWY, VLLSFPISAIIESIAEPFSVI, FAIGQGMLICVKRIFVLAGLFMF, AQYIGAIAYLLFNFVAFYIYI, VVGVIGFVACTFGIPYSPVVI, GGALLLSLYSGYILVTAINGI, IIHLIINYVLCVYMNSAGFIV, TSIFLGVSLLATSFTYLLFAT, and PGLSYTLAHIAIGAVCLILTA.

The protein belongs to the RFT1 family.

The protein localises to the endoplasmic reticulum membrane. It participates in protein modification; protein glycosylation. In terms of biological role, intramembrane glycolipid transporter that operates in the biosynthetic pathway of dolichol-linked oligosaccharides, the glycan precursors employed in protein asparagine (N)-glycosylation. The sequential addition of sugars to dolichol pyrophosphate produces dolichol-linked oligosaccharides containing fourteen sugars, including two GlcNAcs, nine mannoses and three glucoses. Once assembled, the oligosaccharide is transferred from the lipid to nascent proteins by oligosaccharyltransferases. The assembly of dolichol-linked oligosaccharides begins on the cytosolic side of the endoplasmic reticulum membrane and finishes in its lumen. RFT1 could mediate the translocation of the cytosolically oriented intermediate DolPP-GlcNAc2Man5, produced by ALG11, into the ER lumen where dolichol-linked oligosaccharides assembly continues. However, the intramembrane lipid transporter activity could not be confirmed in vitro. The polypeptide is Man(5)GlcNAc(2)-PP-dolichol translocation protein RFT1 (Caenorhabditis elegans).